A 150-amino-acid polypeptide reads, in one-letter code: Transmembrane protein PMIS2 (150 aa).

Low complexity predominate over residues 1–12 (MALKPPSATQPA). The disordered stretch occupies residues 1 to 61 (MALKPPSATQ…EPQEPTQTPE (61 aa)). The segment covering 13 to 22 (PNAPATPDAP) has biased composition (pro residues). Positions 23–61 (PTTGDPGASAAPGSPTTTGGPGAPAEVPQEPQEPTQTPE) are enriched in low complexity. 2 helical membrane-spanning segments follow: residues 71–91 (LCLT…ALYF) and 130–150 (GWFG…LVLY).

Belongs to the CD225/Dispanin family.

It localises to the membrane. May play a role in spermatozoa mobility. The polypeptide is Transmembrane protein PMIS2 (Homo sapiens (Human)).